Consider the following 932-residue polypeptide: Chaperone protein ClpC3, chloroplastic (932 aa).

The disordered stretch occupies residues 1–20 (MERTLLNPPPSLRSPACRTT). The transit peptide at 1–48 (MERTLLNPPPSLRSPACRTTTATRIRPSSSMATMIPTPPPMRHARLVK) directs the protein to the chloroplast. Positions 99–240 (FDMFTDKAIK…RSEVIRMISD (142 aa)) constitute a Clp R domain. Repeat stretches follow at residues 102–167 (FTDK…AGRG) and 177–240 (FTPA…MISD). The tract at residues 264-511 (LLEYGTNLTK…LVRLRNAQLP (248 aa)) is i. 309 to 316 (GEPGVGKT) contributes to the ATP binding site. Residues 518–553 (EKKLKKIMAEKSEAIRSQDFEKAGALRGEEVELKSE) enclose the UVR domain. Positions 579-770 (VTEADVQHIV…LIIMTSNVGS (192 aa)) are II. 653–660 (GPTGVGKS) is an ATP binding site.

It belongs to the ClpA/ClpB family. ClpC subfamily.

The protein localises to the plastid. The protein resides in the chloroplast. Its function is as follows. Molecular chaperone that may interact with a ClpP-like protease involved in degradation of denatured proteins in the chloroplast. This chain is Chaperone protein ClpC3, chloroplastic (CLPC3), found in Oryza sativa subsp. japonica (Rice).